The following is a 126-amino-acid chain: Aspartate 1-decarboxylase (126 aa).

The Schiff-base intermediate with substrate; via pyruvic acid role is filled by Ser-25. A Pyruvic acid (Ser) modification is found at Ser-25. Substrate is bound at residue Thr-57. The active-site Proton donor is the Tyr-58. Gly-73–Ala-75 is a binding site for substrate.

This sequence belongs to the PanD family. Heterooctamer of four alpha and four beta subunits. It depends on pyruvate as a cofactor. Post-translationally, is synthesized initially as an inactive proenzyme, which is activated by self-cleavage at a specific serine bond to produce a beta-subunit with a hydroxyl group at its C-terminus and an alpha-subunit with a pyruvoyl group at its N-terminus.

Its subcellular location is the cytoplasm. The enzyme catalyses L-aspartate + H(+) = beta-alanine + CO2. Its pathway is cofactor biosynthesis; (R)-pantothenate biosynthesis; beta-alanine from L-aspartate: step 1/1. In terms of biological role, catalyzes the pyruvoyl-dependent decarboxylation of aspartate to produce beta-alanine. This Salmonella choleraesuis (strain SC-B67) protein is Aspartate 1-decarboxylase.